A 448-amino-acid chain; its full sequence is Senescence/dehydration-associated protein At4g35985, chloroplastic (448 aa).

A disordered region spans residues 1 to 36; it reads MECSATPPKLYPTVDTSTTVAPLPKSSSSSSSTNNN. Residues 1–56 constitute a chloroplast transit peptide; it reads MECSATPPKLYPTVDTSTTVAPLPKSSSSSSSTNNNNLYPSINVNDLVNNIFPDPT. The segment covering 26-36 has biased composition (low complexity); it reads SSSSSSSTNNN. Residues 248–416 form the Senescence domain; that stretch reads IAAGSGQLIK…AWTVFKIRQA (169 aa). The segment at 422-448 is disordered; sequence AMKPSSLAKTVVKTAAKERKKGKKSSK. Residues 439–448 show a composition bias toward basic residues; sequence ERKKGKKSSK.

Expressed in leaves (especially in midribs and trichomes), apical meristemic regions, stems, roots and flowers.

Its subcellular location is the plastid. The protein resides in the chloroplast. This chain is Senescence/dehydration-associated protein At4g35985, chloroplastic, found in Arabidopsis thaliana (Mouse-ear cress).